The following is a 456-amino-acid chain: Phosphomethylpyrimidine synthase (456 aa).

Residues asparagine 80, methionine 109, tyrosine 139, histidine 175, 195 to 197 (SRG), 236 to 239 (DSLR), and glutamate 275 contribute to the substrate site. Histidine 279 is a Zn(2+) binding site. Tyrosine 302 provides a ligand contact to substrate. Histidine 343 contributes to the Zn(2+) binding site. [4Fe-4S] cluster-binding residues include cysteine 423, cysteine 426, and cysteine 431.

Belongs to the ThiC family. The cofactor is [4Fe-4S] cluster.

It catalyses the reaction 5-amino-1-(5-phospho-beta-D-ribosyl)imidazole + S-adenosyl-L-methionine = 4-amino-2-methyl-5-(phosphooxymethyl)pyrimidine + CO + 5'-deoxyadenosine + formate + L-methionine + 3 H(+). It functions in the pathway cofactor biosynthesis; thiamine diphosphate biosynthesis. Its function is as follows. Catalyzes the synthesis of the hydroxymethylpyrimidine phosphate (HMP-P) moiety of thiamine from aminoimidazole ribotide (AIR) in a radical S-adenosyl-L-methionine (SAM)-dependent reaction. The sequence is that of Phosphomethylpyrimidine synthase from Prochlorococcus marinus (strain MIT 9312).